The sequence spans 454 residues: Pup--protein ligase (454 aa).

E9 is a binding site for Mg(2+). Residue R53 participates in ATP binding. Y55 lines the Mg(2+) pocket. D57 acts as the Proton acceptor in catalysis. E63 contributes to the Mg(2+) binding site. ATP is bound by residues T66 and W420.

The protein belongs to the Pup ligase/Pup deamidase family. Pup-conjugating enzyme subfamily.

It catalyses the reaction ATP + [prokaryotic ubiquitin-like protein]-L-glutamate + [protein]-L-lysine = ADP + phosphate + N(6)-([prokaryotic ubiquitin-like protein]-gamma-L-glutamyl)-[protein]-L-lysine.. It participates in protein degradation; proteasomal Pup-dependent pathway. The protein operates within protein modification; protein pupylation. Functionally, catalyzes the covalent attachment of the prokaryotic ubiquitin-like protein modifier Pup to the proteasomal substrate proteins, thereby targeting them for proteasomal degradation. This tagging system is termed pupylation. The ligation reaction involves the side-chain carboxylate of the C-terminal glutamate of Pup and the side-chain amino group of a substrate lysine. In Pseudarthrobacter chlorophenolicus (strain ATCC 700700 / DSM 12829 / CIP 107037 / JCM 12360 / KCTC 9906 / NCIMB 13794 / A6) (Arthrobacter chlorophenolicus), this protein is Pup--protein ligase.